The chain runs to 277 residues: Phosphate import ATP-binding protein PstB (277 aa).

The ABC transporter domain maps to 31–272 (IEVPGLSLYY…PAKKQTEDYI (242 aa)). 63–70 (GPSGCGKS) lines the ATP pocket.

Belongs to the ABC transporter superfamily. Phosphate importer (TC 3.A.1.7) family. The complex is composed of two ATP-binding proteins (PstB), two transmembrane proteins (PstC and PstA) and a solute-binding protein (PstS).

It is found in the cell inner membrane. It carries out the reaction phosphate(out) + ATP + H2O = ADP + 2 phosphate(in) + H(+). Its function is as follows. Part of the ABC transporter complex PstSACB involved in phosphate import. Responsible for energy coupling to the transport system. This chain is Phosphate import ATP-binding protein PstB, found in Pseudomonas fluorescens (strain ATCC BAA-477 / NRRL B-23932 / Pf-5).